A 199-amino-acid chain; its full sequence is Probable GTP-binding protein EngB (199 aa).

Residues 22 to 196 enclose the EngB-type G domain; the sequence is NFSEVAFLGR…EDVIINQTLG (175 aa). Residues 30-37, 57-61, 82-85, 152-155, and 175-177 each bind GTP; these read GRSNVGKS, GKTQL, DLPG, TKCD, and VSN. Mg(2+)-binding residues include Ser-37 and Thr-59.

It belongs to the TRAFAC class TrmE-Era-EngA-EngB-Septin-like GTPase superfamily. EngB GTPase family. Requires Mg(2+) as cofactor.

Necessary for normal cell division and for the maintenance of normal septation. The chain is Probable GTP-binding protein EngB from Campylobacter jejuni subsp. doylei (strain ATCC BAA-1458 / RM4099 / 269.97).